The primary structure comprises 500 residues: Protein DML1 (500 aa).

It belongs to the misato family.

The protein localises to the mitochondrion. Involved in the partitioning of the mitochondrial organelle and mitochondrial DNA (mtDNA) inheritance. The polypeptide is Protein DML1 (DML1) (Scheffersomyces stipitis (strain ATCC 58785 / CBS 6054 / NBRC 10063 / NRRL Y-11545) (Yeast)).